The following is a 338-amino-acid chain: Heat-inducible transcription repressor HrcA (338 aa).

The protein belongs to the HrcA family.

In terms of biological role, negative regulator of class I heat shock genes (grpE-dnaK-dnaJ and groELS operons). Prevents heat-shock induction of these operons. This chain is Heat-inducible transcription repressor HrcA, found in Bacillus cereus (strain AH820).